A 482-amino-acid chain; its full sequence is MTAAVTQDNTSRTGAAAGRVVRVIGPVVDVEFPRGAIPELFNALHADITLTSVAKTLTLEVAQHLGDNIVRTISMQPTDGLVRGATVTDTGKPISVPVGDVVKGHVFNALGDCLDTPGLGRDGEQWGIHRKPPSFDQLEGKTELLETGIKVIDLLTPYVKGGKIGLFGGAGVGKTVLIQEMITRIAREFSGTSVFAGVGERTREGTDLHLEMEEMGVLQDTALVFGQMDEPPGTRMRVALSALTMAEYFRDVQHQDVLLFIDNIFRFTQAGSEVSTLLGRMPSAVGYQPTLADEMGELQERITSTRGRSITSLQAIYVPADDYTDPAPATTFAHLDATTELSRPISQKGIYPAVDPLTSTSRILEASIVGDRHFAVANEVKRILQKYKELQDIIAILGMDELSEEDKVLVGRARRLEKFLGQNFIVAEKFTGQPGSVVPLEQTIDDFDRVCKGEFDHYPEQAFNSCGGLDDVEKAAKKIAGK.

168 to 175 (GGAGVGKT) contributes to the ATP binding site.

Belongs to the ATPase alpha/beta chains family. As to quaternary structure, F-type ATPases have 2 components, CF(1) - the catalytic core - and CF(0) - the membrane proton channel. CF(1) has five subunits: alpha(3), beta(3), gamma(1), delta(1), epsilon(1). CF(0) has three main subunits: a(1), b(2) and c(9-12). The alpha and beta chains form an alternating ring which encloses part of the gamma chain. CF(1) is attached to CF(0) by a central stalk formed by the gamma and epsilon chains, while a peripheral stalk is formed by the delta and b chains.

Its subcellular location is the cell membrane. The catalysed reaction is ATP + H2O + 4 H(+)(in) = ADP + phosphate + 5 H(+)(out). Functionally, produces ATP from ADP in the presence of a proton gradient across the membrane. The catalytic sites are hosted primarily by the beta subunits. The protein is ATP synthase subunit beta of Nocardia farcinica (strain IFM 10152).